We begin with the raw amino-acid sequence, 478 residues long: ATP synthase subunit beta (478 aa).

151–158 lines the ATP pocket; sequence GGAGVGKT.

This sequence belongs to the ATPase alpha/beta chains family. F-type ATPases have 2 components, CF(1) - the catalytic core - and CF(0) - the membrane proton channel. CF(1) has five subunits: alpha(3), beta(3), gamma(1), delta(1), epsilon(1). CF(0) has three main subunits: a(1), b(2) and c(9-12). The alpha and beta chains form an alternating ring which encloses part of the gamma chain. CF(1) is attached to CF(0) by a central stalk formed by the gamma and epsilon chains, while a peripheral stalk is formed by the delta and b chains.

The protein resides in the cell inner membrane. It catalyses the reaction ATP + H2O + 4 H(+)(in) = ADP + phosphate + 5 H(+)(out). In terms of biological role, produces ATP from ADP in the presence of a proton gradient across the membrane. The catalytic sites are hosted primarily by the beta subunits. The sequence is that of ATP synthase subunit beta from Xanthobacter autotrophicus (strain ATCC BAA-1158 / Py2).